The sequence spans 197 residues: Small ribosomal subunit protein uS7 (197 aa).

It belongs to the universal ribosomal protein uS7 family. In terms of assembly, part of the 30S ribosomal subunit.

One of the primary rRNA binding proteins, it binds directly to 16S rRNA where it nucleates assembly of the head domain of the 30S subunit. Is located at the subunit interface close to the decoding center. The chain is Small ribosomal subunit protein uS7 from Methanopyrus kandleri (strain AV19 / DSM 6324 / JCM 9639 / NBRC 100938).